Reading from the N-terminus, the 325-residue chain is Solute-binding protein Bpro_4736 (325 aa).

Positions 1-27 (MKTRTLKVLKPTLALLLAASFSAGALA) are cleaved as a signal peptide. 168 to 173 (RISPVY) serves as a coordination point for phenylglyoxylate.

This sequence belongs to the bacterial solute-binding protein 7 family. In terms of assembly, the complex is comprised of an extracytoplasmic solute-binding protein and a heteromeric permease formed by two transmembrane proteins.

The protein localises to the periplasm. Its function is as follows. Solute-binding protein that binds phenylglyoxylate (in vitro). Probably part of a tripartite ATP-independent periplasmic (TRAP) transport system that mediates solute transport into the cytoplasm. This Polaromonas sp. (strain JS666 / ATCC BAA-500) protein is Solute-binding protein Bpro_4736.